The sequence spans 244 residues: Transcriptional regulatory protein AruR (244 aa).

A Response regulatory domain is found at 6–124; it reads RVLVVDDDPV…ELVSRAKNLI (119 aa). A 4-aspartylphosphate modification is found at Asp60. Positions 139-239 form a DNA-binding region, ompR/PhoB-type; the sequence is QALRQFGDWL…IHGAGYLFTA (101 aa).

In terms of processing, phosphorylated by AruS.

It is found in the cytoplasm. Its pathway is amino-acid degradation; L-arginine degradation [regulation]. Functionally, member of the two-component regulatory system AruS/AruR, which is involved in the regulation of the arginine transaminase (ATA) pathway in response to exogeneous L-arginine. Regulates transcription of aruH and aruI. The chain is Transcriptional regulatory protein AruR (aruR) from Pseudomonas aeruginosa (strain ATCC 15692 / DSM 22644 / CIP 104116 / JCM 14847 / LMG 12228 / 1C / PRS 101 / PAO1).